Here is a 484-residue protein sequence, read N- to C-terminus: Protein nucleotidyltransferase YdiU (484 aa).

The ATP site is built by Gly81, Gly83, Arg84, Lys103, Asp115, Gly116, Arg166, and Arg173. Catalysis depends on Asp244, which acts as the Proton acceptor. Residues Asn245 and Asp254 each coordinate Mg(2+). Residue Asp254 coordinates ATP.

The protein belongs to the SELO family. It depends on Mg(2+) as a cofactor. Mn(2+) serves as cofactor.

The catalysed reaction is L-seryl-[protein] + ATP = 3-O-(5'-adenylyl)-L-seryl-[protein] + diphosphate. The enzyme catalyses L-threonyl-[protein] + ATP = 3-O-(5'-adenylyl)-L-threonyl-[protein] + diphosphate. It catalyses the reaction L-tyrosyl-[protein] + ATP = O-(5'-adenylyl)-L-tyrosyl-[protein] + diphosphate. It carries out the reaction L-histidyl-[protein] + UTP = N(tele)-(5'-uridylyl)-L-histidyl-[protein] + diphosphate. The catalysed reaction is L-seryl-[protein] + UTP = O-(5'-uridylyl)-L-seryl-[protein] + diphosphate. The enzyme catalyses L-tyrosyl-[protein] + UTP = O-(5'-uridylyl)-L-tyrosyl-[protein] + diphosphate. In terms of biological role, nucleotidyltransferase involved in the post-translational modification of proteins. It can catalyze the addition of adenosine monophosphate (AMP) or uridine monophosphate (UMP) to a protein, resulting in modifications known as AMPylation and UMPylation. This chain is Protein nucleotidyltransferase YdiU, found in Shewanella oneidensis (strain ATCC 700550 / JCM 31522 / CIP 106686 / LMG 19005 / NCIMB 14063 / MR-1).